The sequence spans 169 residues: Zinc metalloproteinase-disintegrin-like mikarin (169 aa).

The region spanning 14-57 is the Peptidase M12B domain; sequence KYLEYVVVDNNMYRNYGNAGPCVMSAEISFEPLQEFSSCDIQEP. The region spanning 65-129 is the Disintegrin domain; sequence PAVCGNYYVE…PEICTGRSAK (65 aa). Cystine bridges form between cysteine 68-cysteine 97, cysteine 79-cysteine 92, cysteine 81-cysteine 87, cysteine 105-cysteine 111, cysteine 110-cysteine 123, and cysteine 150-cysteine 161. The D/ECD-tripeptide motif lies at 116–118; it reads DCD.

It belongs to the venom metalloproteinase (M12B) family. P-III subfamily. P-IIIa sub-subfamily. As to quaternary structure, monomer. Zn(2+) serves as cofactor. As to expression, expressed by the venom gland.

The protein localises to the secreted. Its activity is regulated as follows. Inhibited by EDTA, but not by PMSF. Its function is as follows. Snake venom zinc metalloproteinase that calcium-independently catalyzes the conversion of prothrombin (F2) to alpha-thrombin through the formation of a thrombin intermediate. The sequence is that of Zinc metalloproteinase-disintegrin-like mikarin from Micropechis ikaheca (New Guinean small-eyed snake).